The primary structure comprises 205 residues: Peptidyl-tRNA hydrolase (205 aa).

Tyr18 lines the tRNA pocket. Catalysis depends on His23, which acts as the Proton acceptor. Tyr69, Asn71, and Asn117 together coordinate tRNA.

Belongs to the PTH family. In terms of assembly, monomer.

It is found in the cytoplasm. The catalysed reaction is an N-acyl-L-alpha-aminoacyl-tRNA + H2O = an N-acyl-L-amino acid + a tRNA + H(+). In terms of biological role, hydrolyzes ribosome-free peptidyl-tRNAs (with 1 or more amino acids incorporated), which drop off the ribosome during protein synthesis, or as a result of ribosome stalling. Functionally, catalyzes the release of premature peptidyl moieties from peptidyl-tRNA molecules trapped in stalled 50S ribosomal subunits, and thus maintains levels of free tRNAs and 50S ribosomes. The polypeptide is Peptidyl-tRNA hydrolase (Thermosynechococcus vestitus (strain NIES-2133 / IAM M-273 / BP-1)).